The following is a 256-amino-acid chain: ATP synthase peripheral stalk subunit b, mitochondrial (256 aa).

Residues 1–42 (MLSRVVLSAAATAASSLKNAAFLGPGVLQATRTFHTGQPHLA) constitute a mitochondrion transit peptide. Lysine 131 is modified (N6-succinyllysine). An N6-acetyllysine mark is found at lysine 139, lysine 154, lysine 162, lysine 221, lysine 233, and lysine 244.

Belongs to the eukaryotic ATPase B chain family. In terms of assembly, component of the ATP synthase complex composed at least of ATP5F1A/subunit alpha, ATP5F1B/subunit beta, ATP5MC1/subunit c (homooctomer), MT-ATP6/subunit a, MT-ATP8/subunit 8, ATP5ME/subunit e, ATP5MF/subunit f, ATP5MG/subunit g, ATP5MK/subunit k, ATP5MJ/subunit j, ATP5F1C/subunit gamma, ATP5F1D/subunit delta, ATP5F1E/subunit epsilon, ATP5PF/subunit F6, ATP5PB/subunit b, ATP5PD/subunit d, ATP5PO/subunit OSCP. ATP synthase complex consists of a soluble F(1) head domain (subunits alpha(3) and beta(3)) - the catalytic core - and a membrane F(0) domain - the membrane proton channel (subunits c, a, 8, e, f, g, k and j). These two domains are linked by a central stalk (subunits gamma, delta, and epsilon) rotating inside the F1 region and a stationary peripheral stalk (subunits F6, b, d, and OSCP).

It localises to the mitochondrion. The protein localises to the mitochondrion inner membrane. In terms of biological role, subunit b, of the mitochondrial membrane ATP synthase complex (F(1)F(0) ATP synthase or Complex V) that produces ATP from ADP in the presence of a proton gradient across the membrane which is generated by electron transport complexes of the respiratory chain. ATP synthase complex consist of a soluble F(1) head domain - the catalytic core - and a membrane F(1) domain - the membrane proton channel. These two domains are linked by a central stalk rotating inside the F(1) region and a stationary peripheral stalk. During catalysis, ATP synthesis in the catalytic domain of F(1) is coupled via a rotary mechanism of the central stalk subunits to proton translocation. In vivo, can only synthesize ATP although its ATP hydrolase activity can be activated artificially in vitro. Part of the complex F(0) domain. Part of the complex F(0) domain and the peripheric stalk, which acts as a stator to hold the catalytic alpha(3)beta(3) subcomplex and subunit a/ATP6 static relative to the rotary elements. This is ATP synthase peripheral stalk subunit b, mitochondrial from Pongo abelii (Sumatran orangutan).